Consider the following 316-residue polypeptide: 4-hydroxy-3-methylbut-2-enyl diphosphate reductase (316 aa).

Residue cysteine 12 participates in [4Fe-4S] cluster binding. (2E)-4-hydroxy-3-methylbut-2-enyl diphosphate is bound by residues histidine 41 and histidine 74. Histidine 41 and histidine 74 together coordinate dimethylallyl diphosphate. Isopentenyl diphosphate-binding residues include histidine 41 and histidine 74. A [4Fe-4S] cluster-binding site is contributed by cysteine 96. Histidine 124 lines the (2E)-4-hydroxy-3-methylbut-2-enyl diphosphate pocket. Residue histidine 124 participates in dimethylallyl diphosphate binding. Histidine 124 is a binding site for isopentenyl diphosphate. Catalysis depends on glutamate 126, which acts as the Proton donor. Residue threonine 168 participates in (2E)-4-hydroxy-3-methylbut-2-enyl diphosphate binding. Cysteine 198 serves as a coordination point for [4Fe-4S] cluster. Residues serine 226, serine 227, asparagine 228, and serine 270 each coordinate (2E)-4-hydroxy-3-methylbut-2-enyl diphosphate. Dimethylallyl diphosphate contacts are provided by serine 226, serine 227, asparagine 228, and serine 270. Residues serine 226, serine 227, asparagine 228, and serine 270 each contribute to the isopentenyl diphosphate site.

It belongs to the IspH family. [4Fe-4S] cluster serves as cofactor.

It carries out the reaction isopentenyl diphosphate + 2 oxidized [2Fe-2S]-[ferredoxin] + H2O = (2E)-4-hydroxy-3-methylbut-2-enyl diphosphate + 2 reduced [2Fe-2S]-[ferredoxin] + 2 H(+). The enzyme catalyses dimethylallyl diphosphate + 2 oxidized [2Fe-2S]-[ferredoxin] + H2O = (2E)-4-hydroxy-3-methylbut-2-enyl diphosphate + 2 reduced [2Fe-2S]-[ferredoxin] + 2 H(+). It participates in isoprenoid biosynthesis; dimethylallyl diphosphate biosynthesis; dimethylallyl diphosphate from (2E)-4-hydroxy-3-methylbutenyl diphosphate: step 1/1. It functions in the pathway isoprenoid biosynthesis; isopentenyl diphosphate biosynthesis via DXP pathway; isopentenyl diphosphate from 1-deoxy-D-xylulose 5-phosphate: step 6/6. Functionally, catalyzes the conversion of 1-hydroxy-2-methyl-2-(E)-butenyl 4-diphosphate (HMBPP) into a mixture of isopentenyl diphosphate (IPP) and dimethylallyl diphosphate (DMAPP). Acts in the terminal step of the DOXP/MEP pathway for isoprenoid precursor biosynthesis. This is 4-hydroxy-3-methylbut-2-enyl diphosphate reductase from Marinobacter nauticus (strain ATCC 700491 / DSM 11845 / VT8) (Marinobacter aquaeolei).